Reading from the N-terminus, the 204-residue chain is Dephospho-CoA kinase (204 aa).

The DPCK domain occupies 5–204 (VVGLTGGIGS…YLANLVKAML (200 aa)). ATP is bound at residue 13 to 18 (GSGKSA).

It belongs to the CoaE family.

The protein resides in the cytoplasm. It catalyses the reaction 3'-dephospho-CoA + ATP = ADP + CoA + H(+). The protein operates within cofactor biosynthesis; coenzyme A biosynthesis; CoA from (R)-pantothenate: step 5/5. Catalyzes the phosphorylation of the 3'-hydroxyl group of dephosphocoenzyme A to form coenzyme A. This chain is Dephospho-CoA kinase, found in Chromobacterium violaceum (strain ATCC 12472 / DSM 30191 / JCM 1249 / CCUG 213 / NBRC 12614 / NCIMB 9131 / NCTC 9757 / MK).